Consider the following 275-residue polypeptide: Probable dual specificity protein phosphatase DDB_G0271350 (275 aa).

Positions 2-143 (GISMILDNFL…LCDLELKLTN (142 aa)) constitute a Tyrosine-protein phosphatase domain. C87 serves as the catalytic Phosphocysteine intermediate.

It belongs to the protein-tyrosine phosphatase family. Non-receptor class dual specificity subfamily.

The enzyme catalyses O-phospho-L-tyrosyl-[protein] + H2O = L-tyrosyl-[protein] + phosphate. It catalyses the reaction O-phospho-L-seryl-[protein] + H2O = L-seryl-[protein] + phosphate. The catalysed reaction is O-phospho-L-threonyl-[protein] + H2O = L-threonyl-[protein] + phosphate. In terms of biological role, has a dual specificity toward Ser/Thr and Tyr-containing proteins. This chain is Probable dual specificity protein phosphatase DDB_G0271350, found in Dictyostelium discoideum (Social amoeba).